The following is a 482-amino-acid chain: Islet cell autoantigen 1-like protein (482 aa).

Residues 44–247 form the AH domain; it reads ASDAELDAKL…TARMMSQIHE (204 aa). 2 disordered regions span residues 365 to 393 and 427 to 449; these read TQECQTAFGSPSASLTSQEPSMGSEPLAH and SHTDNQPVPSQSPKKLTRSPNNG. Polar residues-rich tracts occupy residues 366–385 and 428–449; these read QECQTAFGSPSASLTSQEPS and HTDNQPVPSQSPKKLTRSPNNG.

The sequence is that of Islet cell autoantigen 1-like protein (ICA1L) from Homo sapiens (Human).